Reading from the N-terminus, the 568-residue chain is Protein AF-9 (568 aa).

The YEATS domain maps to 1 to 138 (MASSCAVQVK…EDFRRKLLKA (138 aa)). Histone H3K9cr binding regions lie at residues 78–80 (YAG) and 106–108 (LHL). Residues 138–475 (AGGDPNRSIH…PPPPLLKTNN (338 aa)) are disordered. Low complexity predominate over residues 149–190 (SSSSSSSSSSSSSSSSSSSSSSSSSSSSSSSSSSSSSSSSSS). A compositionally biased stretch (basic and acidic residues) spans 202 to 265 (EHKEKPSKDS…PKPMSKEPKP (64 aa)). Phosphoserine is present on residues Ser-288 and Ser-294. The Nuclear localization signal motif lies at 295–300 (AKKRKK). The segment covering 303 to 313 (SEALFKSFSSA) has biased composition (low complexity). The segment covering 322-349 (ADKKQIKDKSHVKMGKVKIESETSEKKK) has biased composition (basic and acidic residues). Lys-339 is covalently cross-linked (Glycyl lysine isopeptide (Lys-Gly) (interchain with G-Cter in SUMO2)). The span at 357–368 (DIVDPNDSDVEE) shows a compositional bias: acidic residues. The segment covering 371 to 395 (SSKSDSEQPSPASSSSSSSSSFTPS) has biased composition (low complexity). Residues Ser-412 and Ser-419 each carry the phosphoserine modification. The segment covering 414 to 429 (DNEEESDEVEDNDNDS) has biased composition (acidic residues). Positions 445–461 (VSLSDGSDSESSSASSP) are enriched in low complexity. Ser-483 is modified (phosphoserine).

In terms of assembly, component of the super elongation complex (SEC), at least composed of EAF1, EAF2, CDK9, MLLT3/AF9, AFF (AFF1 or AFF4), the P-TEFb complex and ELL (ELL, ELL2 or ELL3). Interacts with BCOR. Interacts with CBX8. Interacts with ALKBH4. In terms of tissue distribution, enriched in undifferentiated hematopoietic stem cells in fetal liver, cord blood and bone marrow.

It localises to the nucleus. The protein resides in the chromosome. Its activity is regulated as follows. Crotonylated lysine binding is strongly inhibited by the peptide XL-07i, carrying a 2-furancarbonyl side chain and capped with a hydrophobic carboxybenzyl group. XL-07i targets the unique pi-pi-pi stacking interaction at the crotonylation recognition site. Chromatin reader component of the super elongation complex (SEC), a complex required to increase the catalytic rate of RNA polymerase II transcription by suppressing transient pausing by the polymerase at multiple sites along the DNA. Specifically recognizes and binds acylated histone H3, with a preference for histone H3 that is crotonylated. Crotonylation marks active promoters and enhancers and confers resistance to transcriptional repressors. Recognizes and binds histone H3 crotonylated at 'Lys-9' (H3K9cr), and with slightly lower affinity histone H3 crotonylated at 'Lys-18' (H3K18cr). Also recognizes and binds histone H3 acetylated and butyrylated at 'Lys-9' (H3K9ac and H3K9bu, respectively), but with lower affinity than crotonylated histone H3. In the SEC complex, MLLT3 is required to recruit the complex to crotonylated histones. Recruitment of the SEC complex to crotonylated histones promotes recruitment of DOT1L on active chromatin to deposit histone H3 'Lys-79' methylation (H3K79me). Plays a key role in hematopoietic stem cell (HSC) maintenance by preserving, rather than conferring, HSC stemness. Acts by binding to the transcription start site of active genes in HSCs and sustaining level of H3K79me2, probably by recruiting DOT1L. This is Protein AF-9 from Homo sapiens (Human).